A 143-amino-acid polypeptide reads, in one-letter code: Pre-mRNA-splicing factor U5-Cwc21 (143 aa).

The 44-residue stretch at 27-70 (EHHRSLRAIKLKVLLYREEREAAGVPPDVISRECATLHGSLLRN) folds into the CWF21 domain.

It belongs to the CWC21 family. In terms of assembly, associates with the NTC complex (or PRP19-associated complex). The NTC complex associates with the spliceosome after the release of the U1 and U4 snRNAs and forms the CWC spliceosome subcomplex reminiscent of a late-stage spliceosome. Associates specifically with U5-containing snRNPs.

The protein resides in the cytoplasm. Its subcellular location is the nucleus. Essential protein involved in pre-mRNA cis- and trans-splicing. May function at or prior to the first catalytic step of splicing at the catalytic center of the spliceosome. May do so by stabilizing the catalytic center or the position of the RNA substrate. The polypeptide is Pre-mRNA-splicing factor U5-Cwc21 (Trypanosoma brucei brucei (strain 927/4 GUTat10.1)).